We begin with the raw amino-acid sequence, 387 residues long: Beta-alanyl-dopamine/carcinine hydrolase (387 aa).

It belongs to the peptidase C45 family. In terms of assembly, the unprocessed protein forms homodimers. May form heterodimers composed of a 15 kDa alpha subunit and a 30 kDa beta subunit. Post-translationally, the protein is synthesized as a 43 kDa precursor which is then self-processed into a 15 kDa alpha subunit and a 30 kDa beta subunit. Processing appears to be necessary for beta-alanyl-dopamine/carcinine hydrolase activity. The beta subunit carries the beta-alanyl-dopamine/carcinine hydrolase activity. In terms of tissue distribution, expressed in body, head, optic lobes and retina (at protein level). Expressed in photoreceptor cells R1-R6 in the lamina and in photoreceptor cells R7 and R8 in the medulla (at protein level).

The protein localises to the cell projection. It is found in the axon. The protein resides in the cytoplasm. It catalyses the reaction carcinine + H2O = histamine + beta-alanine. The enzyme catalyses beta-alanyl-dopamine + H2O = dopamine + beta-alanine. In terms of biological role, in the cuticle, catalyzes the hydrolysis of beta-alanyl-dopamine releasing dopamine and beta-alanine; dopamine is a metabolite involved in the pigmentation and sclerotization of the insect cuticle. In the photoreceptor cells, catalyzes the hydrolysis of carcinine releasing histamine and beta-alanine contributing to the recycling of the neurotransmitter histamine in the optical nerve system. Also, regulates the cuticular hydrocarbon composition in females. The protein is Beta-alanyl-dopamine/carcinine hydrolase of Drosophila melanogaster (Fruit fly).